Consider the following 59-residue polypeptide: Small ribosomal subunit protein bS21A (59 aa).

It belongs to the bacterial ribosomal protein bS21 family.

This Gloeobacter violaceus (strain ATCC 29082 / PCC 7421) protein is Small ribosomal subunit protein bS21A.